Here is a 548-residue protein sequence, read N- to C-terminus: Membrane protein insertase YidC (548 aa).

Residues 6-26 (NLLVIALLFVSFMIWQAWEQD) traverse the membrane as a helical segment. Residues 28 to 56 (NPQPQTQQTTQTTTTAAGSAADQGVPASG) form a disordered region. The segment covering 29 to 42 (PQPQTQQTTQTTTT) has biased composition (low complexity). 4 helical membrane passes run 350 to 370 (FVGN…GIMY), 424 to 444 (FPLI…MGSI), 458 to 478 (LSAQ…MFFI), and 499 to 519 (PVIF…YYIV).

It belongs to the OXA1/ALB3/YidC family. Type 1 subfamily. In terms of assembly, interacts with the Sec translocase complex via SecD. Specifically interacts with transmembrane segments of nascent integral membrane proteins during membrane integration.

It is found in the cell inner membrane. Its function is as follows. Required for the insertion and/or proper folding and/or complex formation of integral membrane proteins into the membrane. Involved in integration of membrane proteins that insert both dependently and independently of the Sec translocase complex, as well as at least some lipoproteins. Aids folding of multispanning membrane proteins. This is Membrane protein insertase YidC from Salmonella typhimurium (strain LT2 / SGSC1412 / ATCC 700720).